The following is a 194-amino-acid chain: Probable calcium-binding protein CML45 (194 aa).

Residues 52 to 63 (NNKDQQETLTKQ) show a composition bias toward basic and acidic residues. The disordered stretch occupies residues 52 to 81 (NNKDQQETLTKQEDDDDDDDDDDDDDDDDI). Positions 64–81 (EDDDDDDDDDDDDDDDDI) are enriched in acidic residues. EF-hand domains lie at 76–98 (DDDD…LGLF), 122–157 (ASLE…LGFK), and 160–194 (SYLD…TSFY). Ca(2+) is bound by residues Asp135, Asn137, Asp139, Glu146, Asp173, Asn175, Asp177, Lys179, and Glu184.

Potential calcium sensor. This chain is Probable calcium-binding protein CML45, found in Arabidopsis thaliana (Mouse-ear cress).